The chain runs to 292 residues: Malonyl-S-ACP:biotin-protein carboxyltransferase MADD (292 aa).

The CoA carboxyltransferase C-terminal domain occupies 1-281 (MEIMMGQGRL…RGKVMAMMDK (281 aa)).

It localises to the cytoplasm. It carries out the reaction N(6)-biotinyl-L-lysyl-[protein] + malonyl-[ACP] = N(6)-carboxybiotinyl-L-lysyl-[protein] + acetyl-[ACP]. In terms of biological role, gamma subunit of the biotin-dependent malonate decarboxylase multienzyme complex (EC 7.2.4.4). The two subunits MADC and MADD are required for the transfer of the malonate carboxy group from the acyl-carrier protein (ACP) to the prosthetic group of the biotin carrier MADF. Required for the regeneration of ACP. The chain is Malonyl-S-ACP:biotin-protein carboxyltransferase MADD (madD) from Malonomonas rubra.